Reading from the N-terminus, the 187-residue chain is MKNDQRRLRDRVAVFACIAIAAIAIDQLTKMWALSALADGRTIRVIPGLLSLTLVRNPGASLGMGSGMTWLISLLAMAACVALVVLAVRTISMKWTVLFAFAFAGAFGNLIDRVIYAEGFLNGKVVDFLNYGWSIGNVADIFLMLAGVAAVLLLFLGEPFSQKDLDEANGKTLGDDANATDDGAKAA.

3 consecutive transmembrane segments (helical) span residues 12-32, 68-88, and 91-111; these read VAVFACIAIAAIAIDQLTKMW, MTWLISLLAMAACVALVVLAV, and ISMKWTVLFAFAFAGAFGNLI. Active-site residues include D127 and D140. A helical transmembrane segment spans residues 141 to 161; the sequence is IFLMLAGVAAVLLLFLGEPFS. The disordered stretch occupies residues 167–187; that stretch reads EANGKTLGDDANATDDGAKAA.

It belongs to the peptidase A8 family.

The protein localises to the cell membrane. It catalyses the reaction Release of signal peptides from bacterial membrane prolipoproteins. Hydrolyzes -Xaa-Yaa-Zaa-|-(S,diacylglyceryl)Cys-, in which Xaa is hydrophobic (preferably Leu), and Yaa (Ala or Ser) and Zaa (Gly or Ala) have small, neutral side chains.. It functions in the pathway protein modification; lipoprotein biosynthesis (signal peptide cleavage). In terms of biological role, this protein specifically catalyzes the removal of signal peptides from prolipoproteins. The polypeptide is Lipoprotein signal peptidase (Bifidobacterium adolescentis (strain ATCC 15703 / DSM 20083 / NCTC 11814 / E194a)).